The primary structure comprises 146 residues: uncharacterized protein (146 aa).

This is an uncharacterized protein from Escherichia coli O157:H7.